The primary structure comprises 240 residues: Tumor protein p53-inducible nuclear protein 1 (240 aa).

Residues glutamate 25 to isoleucine 37 carry the LIR motif.

Interacts with p53/TP53 and HIPK2. Interacts with PRKCG, GABARAP, GABARAPL1, GABARAPL2, MAP1LC3A, MAP1LC3B and MAP1LC3C. As to expression, ubiquitously expressed.

The protein localises to the cytoplasm. It is found in the cytosol. It localises to the nucleus. Its subcellular location is the PML body. The protein resides in the cytoplasmic vesicle. The protein localises to the autophagosome. Its function is as follows. Antiproliferative and proapoptotic protein involved in cell stress response which acts as a dual regulator of transcription and autophagy. Acts as a positive regulator of autophagy. In response to cellular stress or activation of autophagy, relocates to autophagosomes where it interacts with autophagosome-associated proteins GABARAP, GABARAPL1/L2, MAP1LC3A/B/C and regulates autophagy. Acts as an antioxidant and plays a major role in p53/TP53-driven oxidative stress response. Possesses both a p53/TP53-independent intracellular reactive oxygen species (ROS) regulatory function and a p53/TP53-dependent transcription regulatory function. Positively regulates p53/TP53 and p73/TP73 and stimulates their capacity to induce apoptosis and regulate cell cycle. In response to double-strand DNA breaks, promotes p53/TP53 phosphorylation on 'Ser-46' and subsequent apoptosis. Acts as a tumor suppressor by inducing cell death by an autophagy and caspase-dependent mechanism. Can reduce cell migration by regulating the expression of SPARC. The sequence is that of Tumor protein p53-inducible nuclear protein 1 (TP53INP1) from Homo sapiens (Human).